A 367-amino-acid polypeptide reads, in one-letter code: Teichoic acid glycerol-phosphate primase (367 aa).

Belongs to the CDP-glycerol glycerophosphotransferase family.

It localises to the cell membrane. It catalyses the reaction N-acetyl-beta-D-mannosaminyl-(1-&gt;4)-N-acetyl-alpha-D-glucosaminyl di-trans,octa-cis-undecaprenyl diphosphate + CDP-glycerol = 4-O-[(2R)-glycerylphospho]-N-acetyl-beta-D-mannosaminyl-(1-&gt;4)-N-acetyl-alpha-D-glucosaminyl di-trans,octa-cis-undecaprenyl diphosphate + CMP + H(+). The protein operates within cell wall biogenesis; poly(ribitol phosphate) teichoic acid biosynthesis. Functionally, catalyzes the addition of a single glycerol phosphate residue to the prenoldiphosphate-linked disaccharide. The polypeptide is Teichoic acid glycerol-phosphate primase (tarB) (Staphylococcus aureus (strain NCTC 8325 / PS 47)).